Here is a 256-residue protein sequence, read N- to C-terminus: Trans-aconitate 2-methyltransferase (256 aa).

It belongs to the methyltransferase superfamily. Tam family.

It is found in the cytoplasm. It carries out the reaction trans-aconitate + S-adenosyl-L-methionine = (E)-3-(methoxycarbonyl)pent-2-enedioate + S-adenosyl-L-homocysteine. Its function is as follows. Catalyzes the S-adenosylmethionine monomethyl esterification of trans-aconitate. The sequence is that of Trans-aconitate 2-methyltransferase from Afipia carboxidovorans (strain ATCC 49405 / DSM 1227 / KCTC 32145 / OM5) (Oligotropha carboxidovorans).